Here is a 728-residue protein sequence, read N- to C-terminus: Fibulin-1 (728 aa).

A signal peptide spans 1-17 (MRICFLLLAFLVAETFA). 30 disulfide bridges follow: Cys23–Cys49, Cys24–Cys56, Cys37–Cys57, Cys66–Cys94, Cys79–Cys95, Cys97–Cys121, Cys98–Cys128, Cys111–Cys129, Cys159–Cys168, Cys164–Cys178, Cys180–Cys279, Cys285–Cys298, Cys292–Cys307, Cys347–Cys359, Cys353–Cys368, Cys375–Cys388, Cys394–Cys404, Cys399–Cys413, Cys415–Cys428, Cys434–Cys448, Cys442–Cys457, Cys459–Cys472, Cys478–Cys489, Cys485–Cys498, Cys500–Cys513, Cys519–Cys534, Cys530–Cys543, Cys545–Cys558, Cys564–Cys576, and Cys569–Cys585. Anaphylatoxin-like domains are found at residues 23-64 (CCAG…LLDN), 65-96 (ACDS…ECCD), and 97-129 (CCLL…NKCC). The EGF-like 1 domain maps to 155–194 (LGDRCASSHCEHLCHDRGGEKVECSCRSGFDLAPDGMACV). In terms of domain architecture, EGF-like 2; calcium-binding spans 195–280 (DRNECLTRQS…GWLFQHGHCV (86 aa)). The EGF-like 3; calcium-binding domain occupies 281 to 344 (DVDECNLGSH…YPKNGMCNDI (64 aa)). In terms of domain architecture, EGF-like 4; calcium-binding spans 343–389 (DIDECVTGHNCGAGEECVNTPGSFRCQQKGNLCAHGYEVNGATGFCE). An EGF-like 5; calcium-binding domain is found at 390-429 (DVNECQQGVCGSMECINLPGTYKCKCGPGYEFNDAKKRCE). One can recognise an EGF-like 6; calcium-binding domain in the interval 430 to 473 (DVDECIKFAGHVCDLSAECINTIGSFECKCKPGFQLASDGRRCE). The 41-residue stretch at 474–514 (DVNECTTGIAACEQKCVNIPGSYQCICDRGFALGPDGTKCE) folds into the EGF-like 7; calcium-binding domain. The EGF-like 8; calcium-binding domain occupies 515-559 (DIDECSIWAGSGNDLCMGGCINTKGSYLCQCPPGYKIQPDGRTCV). Residues 560 to 610 (DVDECAMGECAGSDKVCVNTLGSFKCHSIDCPTNYIHDSLNKNQIADGYSC) form the EGF-like 9; calcium-binding domain. Residue Asn624 is glycosylated (N-linked (GlcNAc...) asparagine).

It belongs to the fibulin family. As to quaternary structure, homomultimerizes and interacts with various extracellular matrix components. Expressed in head muscle cells, anterior and posterior intestinal cells. Isoform a: Expressed in male and hermaphrodite gonad, anterior and posterior intestine and pharyngeal basement membranes, body-wall muscle, GLR cells, uterine attachment and mechanosensory neurons. Isoform c: Expressed on ALM/PLM mechanosensory neuron attachments, in flexible tracks connecting the pharyngeal, body-wall-muscle basement membranes and in uterine attachments.

Its subcellular location is the secreted. The protein localises to the extracellular space. The protein resides in the extracellular matrix. It is found in the basement membrane. Its function is as follows. Incorporated into fibronectin-containing matrix fibers. Plays a role in cell adhesion and migration along protein fibers within the extracellular matrix (ECM). Important for certain developmental processes and contributes to the supramolecular organization of ECM architecture, in particular to those of basement membranes. Involved in regulating the shape and adhesion of cells in the developing pharynx, intestine, body-wall muscle and gonadal tissue. During gonadogenesis, regulates the width of gonads and the migration of distal tip cells (DTC). Together with type IV collagen let-2 and downstream of metalloprotease mig-17, recruits nidogen nid-1 to the gonad basement membrane thereby inducing basement membrane remodeling required for the directional migration of DTCs. Acts antagonistically with metalloprotease gon-1 to maintain optimal levels of type IV collagen emb-9 in the gonad basement membrane during gonadogenesis. Required for larval development. In terms of biological role, involved in the assembly of the flexible hemicentin-containing tracks found joining the pharynx and body-wall-muscle basement membranes. The chain is Fibulin-1 (fbl-1) from Caenorhabditis elegans.